Consider the following 545-residue polypeptide: Capsular polysaccharide phosphotransferase SacB (545 aa).

This sequence belongs to the stealth family.

Functionally, part of a capsular biosynthesis operon and has been suggested to be the polymerase that links individual UDP-N-acetyl-D-mannosamine monomers. In serotype A the capsule is composed of repeated units of (alpha 1-6)-linked N-acetyl-D-mannosamine-1-phosphate. Non-polar disruption of this open reading frame prevented capsule synthesis. The sequence is that of Capsular polysaccharide phosphotransferase SacB (sacB) from Neisseria meningitidis serogroup A.